A 439-amino-acid polypeptide reads, in one-letter code: Ribosomal protein uS12 methylthiotransferase RimO (439 aa).

The 111-residue stretch at Pro-5–Pro-115 folds into the MTTase N-terminal domain. Cys-14, Cys-50, Cys-79, Cys-146, Cys-150, and Cys-153 together coordinate [4Fe-4S] cluster. The Radical SAM core domain occupies Leu-132 to Asp-369. A TRAM domain is found at Gln-372–Asp-439.

It belongs to the methylthiotransferase family. RimO subfamily. [4Fe-4S] cluster serves as cofactor.

The protein resides in the cytoplasm. The catalysed reaction is L-aspartate(89)-[ribosomal protein uS12]-hydrogen + (sulfur carrier)-SH + AH2 + 2 S-adenosyl-L-methionine = 3-methylsulfanyl-L-aspartate(89)-[ribosomal protein uS12]-hydrogen + (sulfur carrier)-H + 5'-deoxyadenosine + L-methionine + A + S-adenosyl-L-homocysteine + 2 H(+). Catalyzes the methylthiolation of an aspartic acid residue of ribosomal protein uS12. The sequence is that of Ribosomal protein uS12 methylthiotransferase RimO from Francisella philomiragia subsp. philomiragia (strain ATCC 25017 / CCUG 19701 / FSC 153 / O#319-036).